The following is an 89-amino-acid chain: Large ribosomal subunit protein bL27 (89 aa).

Residues 1–26 (MAQKKAGGSSRNGRDSVGQRRGVKRF) are disordered.

Belongs to the bacterial ribosomal protein bL27 family.

In Desulfovibrio desulfuricans (strain ATCC 27774 / DSM 6949 / MB), this protein is Large ribosomal subunit protein bL27.